We begin with the raw amino-acid sequence, 241 residues long: HTH-type quorum-sensing regulator RhlR (241 aa).

An HTH luxR-type domain is found at 174–239 (LMSNPVCLSH…LAAAYAAALG (66 aa)). A DNA-binding region (H-T-H motif) is located at residues 198–217 (SGEIAIILSISESTVNFHHK).

The protein belongs to the autoinducer-regulated transcriptional regulatory protein family. Homodimer in the absence of any acyl-L-homoserine lactone. The presence of the autoinducer C4-HSL has no significant effect on dimerization whereas N-(3-oxododecanoyl)-L-homoserine lactone (3O-C12-HSL), the LasR inducer, is able to dissociate the RhlR homodimers into monomers.

The protein localises to the cytoplasm. Its activity is regulated as follows. Activated by interaction with the autoinducer signal molecule N-butanoyl-L-homoserine lactone (C4-HSL or BHL), the product of the RhlI synthase. Is also activated by binding to rosmarinic acid (RA), a homoserine lactone mimic produced by plants, which induces a broad quorum sensing response, including the induction of all major quorum sensing controlled virulence factors. Rosmarinic acid secretion may be a plant defense mechanism to stimulate a premature quorum sensing response. Quorum-sensing regulator that controls the expression of multiple virulence factors in response to extracellular signaling molecules called autoinducers. Involved, among others, in the transcriptional regulation of genes that are responsible for rhamnolipid surfactant biosynthesis. Acts by binding to a specific sequence in the rhlAB regulatory region, both in the presence and in the absence of its autoinducer. In the former case it activates transcription of the promoter, whereas in the latter it acts as a transcriptional repressor. Also regulates the expression of the rmlBDAC operon, encoding dTDP-L-rhamnose biosynthetic enzymes, by binding to the rml box in the promoter region. In addition, is involved in the regulation of the production of elastase (lasB) and pyocyanine. The chain is HTH-type quorum-sensing regulator RhlR from Pseudomonas aeruginosa (strain ATCC 15692 / DSM 22644 / CIP 104116 / JCM 14847 / LMG 12228 / 1C / PRS 101 / PAO1).